The chain runs to 157 residues: Small ribosomal subunit protein uS7 (157 aa).

This sequence belongs to the universal ribosomal protein uS7 family. As to quaternary structure, part of the 30S ribosomal subunit. Contacts proteins S9 and S11.

Its function is as follows. One of the primary rRNA binding proteins, it binds directly to 16S rRNA where it nucleates assembly of the head domain of the 30S subunit. Is located at the subunit interface close to the decoding center, probably blocks exit of the E-site tRNA. In Chlamydia trachomatis serovar L2 (strain ATCC VR-902B / DSM 19102 / 434/Bu), this protein is Small ribosomal subunit protein uS7.